Here is a 161-residue protein sequence, read N- to C-terminus: Protein-export protein SecB (161 aa).

This sequence belongs to the SecB family. As to quaternary structure, homotetramer, a dimer of dimers. One homotetramer interacts with 1 SecA dimer.

The protein localises to the cytoplasm. Functionally, one of the proteins required for the normal export of preproteins out of the cell cytoplasm. It is a molecular chaperone that binds to a subset of precursor proteins, maintaining them in a translocation-competent state. It also specifically binds to its receptor SecA. The sequence is that of Protein-export protein SecB from Shewanella baltica (strain OS155 / ATCC BAA-1091).